The chain runs to 256 residues: CD209 antigen-like protein 2 (256 aa).

Over 1–50 the chain is Cytoplasmic; that stretch reads MSDSKEPRAQPLGLLEEEELITSSMNFFPRDFGFRQTRGYKSLAGCLGHA. The Endocytosis signal motif lies at 14 to 15; it reads LL. A helical; Signal-anchor for type II membrane protein transmembrane segment spans residues 51–71; that stretch reads PLVLPLLFFTLFTGLLVAILV. Topologically, residues 72–240 are extracellular; the sequence is QVSKNPSSQR…KSAASCSRDE (169 aa). Intrachain disulfides connect Cys-108–Cys-119, Cys-136–Cys-229, and Cys-208–Cys-221. In terms of domain architecture, C-type lectin spans 114–230; sequence FFQGNCYFIS…CSAAKFWICK (117 aa). Ca(2+)-binding residues include Glu-199, Asn-201, Ile-203, Glu-206, Asn-217, and Asp-218.

Predominantly expressed in liver and axillary lymph nodes. At very low levels also found in other tissues.

Its subcellular location is the membrane. In terms of biological role, probable pathogen-recognition receptor involved in peripheral immune surveillance in liver. May mediate the endocytosis of pathogens which are subsequently degraded in lysosomal compartments. Probably recognizes in a calcium-dependent manner high mannose N-linked oligosaccharides in a variety of pathogen antigens. Is a receptor for ICAM3, probably by binding to mannose-like carbohydrates. This chain is CD209 antigen-like protein 2 (CD209L2), found in Macaca mulatta (Rhesus macaque).